Reading from the N-terminus, the 837-residue chain is Tuftelin-interacting protein 11 (837 aa).

Over residues 1 to 13 (MSLSHLYRDGEGH) the composition is skewed to basic and acidic residues. Disordered regions lie at residues 1-31 (MSLS…DWDL), 54-73 (WAER…RARD), and 85-133 (LKKG…KGFA). A required for interaction with DHX15 region spans residues 1–50 (MSLSHLYRDGEGHMDDDDDERENFEITDWDLQNEFNPNRQRHWQTKEEAT). Serine 2 is subject to Phosphoserine. Residues 14–28 (MDDDDDERENFEITD) show a composition bias toward acidic residues. The span at 54-64 (WAERDSDEERP) shows a compositional bias: basic and acidic residues. Phosphoserine occurs at positions 59 and 98. A compositionally biased stretch (acidic residues) spans 91–102 (EEAELEDSEDEE). The segment covering 103–116 (KPVKQDDFPKDFGP) has biased composition (basic and acidic residues). Position 144 is a phosphoserine (serine 144). Residues 149–195 (TKGIGQKLLQKMGYVPGRGLGKNAQGIINPIEAKQRKGKGAVGAYGS) form the G-patch domain. Disordered regions lie at residues 183 to 236 (QRKG…KKKP) and 289 to 312 (HNVP…EAKA). The residue at position 210 (serine 210) is a Phosphoserine. The span at 217–231 (EFQKELSQWRKDPSG) shows a compositional bias: basic and acidic residues. Positions 700–705 (VKDKFN) match the Nuclear localization signal motif. Residues 710 to 734 (IMNRAVSSNVGAYMQPGARENIAYL) are required for nuclear speckle localization.

This sequence belongs to the TFP11/STIP family. Identified in the spliceosome C complex. Found in the Intron Large (IL) complex, a post-mRNA release spliceosomal complex containing the excised intron, U2, U5 and U6 snRNPs, and splicing factors. Interacts with TUFT1. Interacts with DHX15; indicative for a recruitment of DHX15 to the IL complex. Interacts with GCFC2.

The protein resides in the cytoplasm. Its subcellular location is the nucleus. In terms of biological role, involved in pre-mRNA splicing, specifically in spliceosome disassembly during late-stage splicing events. Intron turnover seems to proceed through reactions in two lariat-intron associated complexes termed Intron Large (IL) and Intron Small (IS). In cooperation with DHX15 seems to mediate the transition of the U2, U5 and U6 snRNP-containing IL complex to the snRNP-free IS complex leading to efficient debranching and turnover of excised introns. May play a role in the differentiation of ameloblasts and odontoblasts or in the forming of the enamel extracellular matrix. In Canis lupus familiaris (Dog), this protein is Tuftelin-interacting protein 11 (TFIP11).